We begin with the raw amino-acid sequence, 659 residues long: DNA mismatch repair protein MutL (659 aa).

Belongs to the DNA mismatch repair MutL/HexB family.

This protein is involved in the repair of mismatches in DNA. It is required for dam-dependent methyl-directed DNA mismatch repair. May act as a 'molecular matchmaker', a protein that promotes the formation of a stable complex between two or more DNA-binding proteins in an ATP-dependent manner without itself being part of a final effector complex. The polypeptide is DNA mismatch repair protein MutL (Ligilactobacillus salivarius (strain UCC118) (Lactobacillus salivarius)).